The primary structure comprises 276 residues: Halorhodopsin (276 aa).

A propeptide spanning residues 1–20 is cleaved from the precursor; the sequence is MTAASTTATTVLQATQSDVL. Pyrrolidone carboxylic acid is present on Gln21. The next 7 membrane-spanning stretches (helical) occupy residues 31-51, 61-81, 109-129, 134-154, 162-182, 195-215, and 220-240; these read SSIW…VAMG, LIWV…AGLA, YLTW…LADT, LFTA…AALI, WVFY…LLVQ, IFGT…ILWA, and GVAL…DILA. Position 241 is an N6-(retinylidene)lysine (Lys241).

This sequence belongs to the archaeal/bacterial/fungal opsin family. Post-translationally, the covalent binding of retinal to the apoprotein, bacterioopsin, generates bacteriorhodopsin.

The protein resides in the membrane. Functionally, light-driven chloride pump. This chain is Halorhodopsin (hop), found in Haloarcula marismortui (strain ATCC 43049 / DSM 3752 / JCM 8966 / VKM B-1809) (Halobacterium marismortui).